The primary structure comprises 372 residues: N-methyl-L-tryptophan oxidase (372 aa).

4–34 (DLIIIGSGSVGAAAGYYATRAGLKVLMTDAH) serves as a coordination point for FAD. The residue at position 307 (cysteine 307) is an S-8alpha-FAD cysteine.

It belongs to the MSOX/MTOX family. MTOX subfamily. In terms of assembly, monomer. Requires FAD as cofactor.

The catalysed reaction is N(alpha)-methyl-L-tryptophan + O2 + H2O = L-tryptophan + formaldehyde + H2O2. Functionally, catalyzes the oxidative demethylation of N-methyl-L-tryptophan. The polypeptide is N-methyl-L-tryptophan oxidase (Citrobacter koseri (strain ATCC BAA-895 / CDC 4225-83 / SGSC4696)).